We begin with the raw amino-acid sequence, 355 residues long: D-alanine--D-alanine ligase (355 aa).

One can recognise an ATP-grasp domain in the interval 143–350 (KTIFSNLKIP…IEQLVAKLVD (208 aa)). Residue 178–233 (IKKLNFPVFVKPSNSGSSLGISKVINKSALLKALEKAWEIDARILVEEGLETREIE) participates in ATP binding. Mg(2+) contacts are provided by aspartate 303, glutamate 317, and asparagine 319.

The protein belongs to the D-alanine--D-alanine ligase family. Mg(2+) is required as a cofactor. The cofactor is Mn(2+).

It localises to the cytoplasm. It catalyses the reaction 2 D-alanine + ATP = D-alanyl-D-alanine + ADP + phosphate + H(+). It functions in the pathway cell wall biogenesis; peptidoglycan biosynthesis. In terms of biological role, cell wall formation. The polypeptide is D-alanine--D-alanine ligase (Prochlorococcus marinus (strain MIT 9312)).